The primary structure comprises 488 residues: Probable cytosol aminopeptidase (488 aa).

Residues K254 and D259 each contribute to the Mn(2+) site. The active site involves K266. Residues D277, D336, and E338 each contribute to the Mn(2+) site. The active site involves R340.

This sequence belongs to the peptidase M17 family. Requires Mn(2+) as cofactor.

It localises to the cytoplasm. The enzyme catalyses Release of an N-terminal amino acid, Xaa-|-Yaa-, in which Xaa is preferably Leu, but may be other amino acids including Pro although not Arg or Lys, and Yaa may be Pro. Amino acid amides and methyl esters are also readily hydrolyzed, but rates on arylamides are exceedingly low.. It carries out the reaction Release of an N-terminal amino acid, preferentially leucine, but not glutamic or aspartic acids.. Functionally, presumably involved in the processing and regular turnover of intracellular proteins. Catalyzes the removal of unsubstituted N-terminal amino acids from various peptides. In Roseiflexus castenholzii (strain DSM 13941 / HLO8), this protein is Probable cytosol aminopeptidase.